The chain runs to 442 residues: GTPase Der (442 aa).

2 consecutive EngA-type G domains span residues 2 to 167 (RTIA…PIQN) and 175 to 351 (FKFC…EQAM). GTP contacts are provided by residues 8–15 (GKPNVGKS), 55–59 (DTGGI), 119–122 (NKVE), 181–188 (GRPNVGKS), 228–232 (DTAGV), and 293–296 (NKWD). The 85-residue stretch at 352–436 (RKVATSLLND…PITLYWQDKN (85 aa)) folds into the KH-like domain.

It belongs to the TRAFAC class TrmE-Era-EngA-EngB-Septin-like GTPase superfamily. EngA (Der) GTPase family. As to quaternary structure, associates with the 50S ribosomal subunit.

Its function is as follows. GTPase that plays an essential role in the late steps of ribosome biogenesis. In Ureaplasma urealyticum serovar 10 (strain ATCC 33699 / Western), this protein is GTPase Der.